Consider the following 134-residue polypeptide: Ribosome-binding factor A (134 aa).

The tract at residues 115 to 134 (EDQRQERGEIPPGSDELQPD) is disordered.

Belongs to the RbfA family. Monomer. Binds 30S ribosomal subunits, but not 50S ribosomal subunits or 70S ribosomes.

Its subcellular location is the cytoplasm. One of several proteins that assist in the late maturation steps of the functional core of the 30S ribosomal subunit. Associates with free 30S ribosomal subunits (but not with 30S subunits that are part of 70S ribosomes or polysomes). Required for efficient processing of 16S rRNA. May interact with the 5'-terminal helix region of 16S rRNA. This chain is Ribosome-binding factor A, found in Synechococcus sp. (strain CC9902).